A 77-amino-acid chain; its full sequence is Cell division topological specificity factor (77 aa).

This sequence belongs to the MinE family.

In terms of biological role, prevents the cell division inhibition by proteins MinC and MinD at internal division sites while permitting inhibition at polar sites. This ensures cell division at the proper site by restricting the formation of a division septum at the midpoint of the long axis of the cell. This is Cell division topological specificity factor from Helicobacter acinonychis (strain Sheeba).